We begin with the raw amino-acid sequence, 101 residues long: Large ribosomal subunit protein P1 (101 aa).

The segment at Ala-65–Thr-89 is disordered. Basic and acidic residues predominate over residues Glu-73–Asp-87.

Belongs to the eukaryotic ribosomal protein P1/P2 family. In terms of assembly, part of the 50S ribosomal subunit. Homodimer, it forms part of the ribosomal stalk which helps the ribosome interact with GTP-bound translation factors. Forms a heptameric uL10/P0(P1)2(P1)2(P1)2 complex, where uL10/P0 forms an elongated spine to which the P1 dimers bind in a sequential fashion.

In terms of biological role, forms part of the ribosomal stalk, playing a central role in the interaction of the ribosome with GTP-bound translation factors. This Methanothermococcus thermolithotrophicus (Methanococcus thermolithotrophicus) protein is Large ribosomal subunit protein P1.